The primary structure comprises 1201 residues: DNA-directed RNA polymerase subunit beta' (1201 aa).

4 residues coordinate Zn(2+): C60, C62, C75, and C78. Mg(2+) contacts are provided by D449, D451, and D453. C818, C892, C899, and C902 together coordinate Zn(2+).

It belongs to the RNA polymerase beta' chain family. In terms of assembly, the RNAP catalytic core consists of 2 alpha, 1 beta, 1 beta' and 1 omega subunit. When a sigma factor is associated with the core the holoenzyme is formed, which can initiate transcription. Mg(2+) serves as cofactor. Requires Zn(2+) as cofactor.

It carries out the reaction RNA(n) + a ribonucleoside 5'-triphosphate = RNA(n+1) + diphosphate. Its function is as follows. DNA-dependent RNA polymerase catalyzes the transcription of DNA into RNA using the four ribonucleoside triphosphates as substrates. This Listeria innocua serovar 6a (strain ATCC BAA-680 / CLIP 11262) protein is DNA-directed RNA polymerase subunit beta'.